The chain runs to 393 residues: MENNNNNNKNDNEINFKKIEINETLESGKFIESKIDMKLGELIIKVQSPMCFSFHKHLVNQFCFNCFSNSHEINNAKFNKFKVDINKNYIIRCNNCKLIYFCSDECFEKVMSIESFQDSTSTNIHTPLECLILSNYHDQTISPKINTLHDQTENRMIINYLSKIAYSTNNNNKFKLLLIEMNQLIGDFNNDNNNQTLSLNEIKNIKNKSFNLRKLFNNFFFNIDKVIIEELYAKSQRNSFGLWKNSDECFGLSMYGNQTIYNNNNDKDDNISISYFNHSCFPNCVRVQENQSISIYSLIPIKKGDELSISYIDIRMSKNDRLLHLKEIYYFECKCKRCTLPPLSNLSLEIEKTIENYTCKNQSIKCTGILYLPPFNKIQRICNFCHWKEPINN.

The region spanning 17–312 (KKIEINETLE…KGDELSISYI (296 aa)) is the SET domain.

This sequence belongs to the class V-like SAM-binding methyltransferase superfamily.

Probable methyltransferase. The chain is SET domain-containing protein DDB_G0283443 from Dictyostelium discoideum (Social amoeba).